Consider the following 188-residue polypeptide: Elongation factor P (188 aa).

It belongs to the elongation factor P family.

Its subcellular location is the cytoplasm. The protein operates within protein biosynthesis; polypeptide chain elongation. Functionally, involved in peptide bond synthesis. Stimulates efficient translation and peptide-bond synthesis on native or reconstituted 70S ribosomes in vitro. Probably functions indirectly by altering the affinity of the ribosome for aminoacyl-tRNA, thus increasing their reactivity as acceptors for peptidyl transferase. The sequence is that of Elongation factor P from Bifidobacterium longum (strain DJO10A).